A 177-amino-acid polypeptide reads, in one-letter code: Large ribosomal subunit protein uL10 (177 aa).

The protein belongs to the universal ribosomal protein uL10 family. Part of the ribosomal stalk of the 50S ribosomal subunit. The N-terminus interacts with L11 and the large rRNA to form the base of the stalk. The C-terminus forms an elongated spine to which L12 dimers bind in a sequential fashion forming a multimeric L10(L12)X complex.

Functionally, forms part of the ribosomal stalk, playing a central role in the interaction of the ribosome with GTP-bound translation factors. This Thermoanaerobacter pseudethanolicus (strain ATCC 33223 / 39E) (Clostridium thermohydrosulfuricum) protein is Large ribosomal subunit protein uL10.